A 499-amino-acid chain; its full sequence is Probable dipeptidase B (499 aa).

Residue C26 is part of the active site.

Belongs to the peptidase C69 family.

It carries out the reaction an L-aminoacyl-L-amino acid + H2O = 2 an L-alpha-amino acid. The chain is Probable dipeptidase B (pepDB) from Streptococcus pyogenes serotype M18 (strain MGAS8232).